A 185-amino-acid polypeptide reads, in one-letter code: Orotate phosphoribosyltransferase (185 aa).

5-phospho-alpha-D-ribose 1-diphosphate-binding positions include Arg98, Lys99, Lys102, His104, and Glu128–Ser136. Orotate is bound by residues Thr132 and Arg160.

The protein belongs to the purine/pyrimidine phosphoribosyltransferase family. PyrE subfamily. In terms of assembly, homodimer. It depends on Mg(2+) as a cofactor.

The catalysed reaction is orotidine 5'-phosphate + diphosphate = orotate + 5-phospho-alpha-D-ribose 1-diphosphate. It functions in the pathway pyrimidine metabolism; UMP biosynthesis via de novo pathway; UMP from orotate: step 1/2. Its function is as follows. Catalyzes the transfer of a ribosyl phosphate group from 5-phosphoribose 1-diphosphate to orotate, leading to the formation of orotidine monophosphate (OMP). The protein is Orotate phosphoribosyltransferase of Bradyrhizobium sp. (strain ORS 278).